The chain runs to 240 residues: Uridylate kinase (240 aa).

14–17 (KLSG) contributes to the ATP binding site. Gly-56 provides a ligand contact to UMP. ATP-binding residues include Gly-57 and Arg-61. Residues Asp-76 and 137–144 (TGNPFFTT) each bind UMP. The ATP site is built by Thr-164, Tyr-170, and Asp-173.

Belongs to the UMP kinase family. Homohexamer.

Its subcellular location is the cytoplasm. It catalyses the reaction UMP + ATP = UDP + ADP. It functions in the pathway pyrimidine metabolism; CTP biosynthesis via de novo pathway; UDP from UMP (UMPK route): step 1/1. With respect to regulation, inhibited by UTP. Its function is as follows. Catalyzes the reversible phosphorylation of UMP to UDP. This chain is Uridylate kinase, found in Paracidovorax citrulli (strain AAC00-1) (Acidovorax citrulli).